A 20-amino-acid polypeptide reads, in one-letter code: Magnificalysin I (20 aa).

Residues 1–10 form a plays an important role in the hemolytic activity region; it reads ALAGTIIAGA. The tract at residues 9–20 is N-terminal region; that stretch reads GASLTFKILDEV.

This sequence belongs to the actinoporin family. Sea anemone subfamily. As to quaternary structure, octamer or nonamer in membranes. Monomer in the soluble state.

Its subcellular location is the secreted. The protein resides in the nematocyst. The protein localises to the target cell membrane. In terms of biological role, pore-forming protein that forms cations-selective hydrophilic pores of around 1 nm and causes cytolysis. Pore formation is a multi-step process that involves specific recognition of membrane sphingomyelin (but neither cholesterol nor phosphatidylcholine) using aromatic rich region and adjacent phosphocholine (POC) binding site, firm binding to the membrane (mainly driven by hydrophobic interactions) accompanied by the transfer of the N-terminal region to the lipid-water interface and finally pore formation after oligomerization of monomers. This chain is Magnificalysin I, found in Heteractis magnifica (Magnificent sea anemone).